Consider the following 669-residue polypeptide: Probable L-type lectin-domain containing receptor kinase I.2 (669 aa).

A signal peptide spans 1–24; the sequence is MAQRFYLLLLLLIFLVNLICFSSQ. Residues 25-295 lie on the Extracellular side of the membrane; sequence QDLSFVFNGF…FTEQKRKRSP (271 aa). Positions 26-266 are legume-lectin like; it reads DLSFVFNGFN…NQYILGWSFS (241 aa). Residues N132, N189, N212, and N233 are each glycosylated (N-linked (GlcNAc...) asparagine). The chain crosses the membrane as a helical span at residues 296–316; that stretch reads LLIVLLVILTLVVIGGLGGYY. At 317-669 the chain is on the cytoplasmic side; the sequence is LYRRKKYAEV…SHTILNGDGR (353 aa). A Protein kinase domain is found at 351-609; it reads FNKDGRLGKG…MQYINRDQAL (259 aa). ATP-binding positions include 357–365 and K379; that span reads LGKGGFGEV. D475 acts as the Proton acceptor in catalysis.

This sequence in the C-terminal section; belongs to the protein kinase superfamily. Ser/Thr protein kinase family. The protein in the N-terminal section; belongs to the leguminous lectin family.

The protein localises to the cell membrane. The enzyme catalyses L-seryl-[protein] + ATP = O-phospho-L-seryl-[protein] + ADP + H(+). It catalyses the reaction L-threonyl-[protein] + ATP = O-phospho-L-threonyl-[protein] + ADP + H(+). Its function is as follows. Involved in resistance response to the pathogenic fungus Alternaria brassicicola. The polypeptide is Probable L-type lectin-domain containing receptor kinase I.2 (Arabidopsis thaliana (Mouse-ear cress)).